The chain runs to 431 residues: Histidine--tRNA ligase (431 aa).

Belongs to the class-II aminoacyl-tRNA synthetase family. As to quaternary structure, homodimer.

It is found in the cytoplasm. It catalyses the reaction tRNA(His) + L-histidine + ATP = L-histidyl-tRNA(His) + AMP + diphosphate + H(+). This chain is Histidine--tRNA ligase, found in Ligilactobacillus salivarius (strain UCC118) (Lactobacillus salivarius).